We begin with the raw amino-acid sequence, 66 residues long: Large ribosomal subunit protein uL30 (66 aa).

This sequence belongs to the universal ribosomal protein uL30 family. As to quaternary structure, part of the 50S ribosomal subunit.

The polypeptide is Large ribosomal subunit protein uL30 (Chelativorans sp. (strain BNC1)).